The chain runs to 230 residues: Octanoyltransferase (230 aa).

The BPL/LPL catalytic domain occupies 40–218 (PSLDDVLILL…CFAEVFGVEL (179 aa)). Substrate contacts are provided by residues 82-89 (RGGEVTYH), 149-151 (AIG), and 162-164 (GFA). The active-site Acyl-thioester intermediate is the Cys-180.

This sequence belongs to the LipB family.

Its subcellular location is the cytoplasm. It catalyses the reaction octanoyl-[ACP] + L-lysyl-[protein] = N(6)-octanoyl-L-lysyl-[protein] + holo-[ACP] + H(+). Its pathway is protein modification; protein lipoylation via endogenous pathway; protein N(6)-(lipoyl)lysine from octanoyl-[acyl-carrier-protein]: step 1/2. In terms of biological role, catalyzes the transfer of endogenously produced octanoic acid from octanoyl-acyl-carrier-protein onto the lipoyl domains of lipoate-dependent enzymes. Lipoyl-ACP can also act as a substrate although octanoyl-ACP is likely to be the physiological substrate. The sequence is that of Octanoyltransferase from Nostoc punctiforme (strain ATCC 29133 / PCC 73102).